The following is a 229-amino-acid chain: Heptaprenylglyceryl phosphate synthase (229 aa).

Lysine 12 contributes to the sn-glycerol 1-phosphate binding site. Mg(2+) is bound by residues aspartate 14 and threonine 40. Sn-glycerol 1-phosphate contacts are provided by residues tyrosine 159 to glycine 164, glycine 189, and glycine 209 to asparagine 210.

The protein belongs to the GGGP/HepGP synthase family. Group I subfamily. As to quaternary structure, homodimer. Mg(2+) serves as cofactor.

It carries out the reaction sn-glycerol 1-phosphate + all-trans-heptaprenyl diphosphate = 3-heptaprenyl-sn-glycero-1-phosphate + diphosphate. The protein operates within membrane lipid metabolism; glycerophospholipid metabolism. Prenyltransferase that catalyzes in vivo the transfer of the heptaprenyl moiety of heptaprenyl pyrophosphate (HepPP; 35 carbon atoms) to the C3 hydroxyl of sn-glycerol-1-phosphate (G1P), producing heptaprenylglyceryl phosphate (HepGP). This reaction is an ether-bond-formation step in the biosynthesis of archaea-type G1P-based membrane lipids found in Bacillales. The protein is Heptaprenylglyceryl phosphate synthase of Staphylococcus saprophyticus subsp. saprophyticus (strain ATCC 15305 / DSM 20229 / NCIMB 8711 / NCTC 7292 / S-41).